A 337-amino-acid chain; its full sequence is Tetraacyldisaccharide 4'-kinase (337 aa).

Residue 55–62 (TIGGNGKT) participates in ATP binding.

It belongs to the LpxK family.

The enzyme catalyses a lipid A disaccharide + ATP = a lipid IVA + ADP + H(+). It functions in the pathway glycolipid biosynthesis; lipid IV(A) biosynthesis; lipid IV(A) from (3R)-3-hydroxytetradecanoyl-[acyl-carrier-protein] and UDP-N-acetyl-alpha-D-glucosamine: step 6/6. Its function is as follows. Transfers the gamma-phosphate of ATP to the 4'-position of a tetraacyldisaccharide 1-phosphate intermediate (termed DS-1-P) to form tetraacyldisaccharide 1,4'-bis-phosphate (lipid IVA). The protein is Tetraacyldisaccharide 4'-kinase of Blochmanniella pennsylvanica (strain BPEN).